A 78-amino-acid chain; its full sequence is Small ribosomal subunit protein bS20 (78 aa).

Residues 1–34 (MANIKSNLKRNKQNRARHTVVHSQTSAVKTQIKK) are disordered. The segment covering 7 to 20 (NLKRNKQNRARHTV) has biased composition (basic residues). Over residues 21–34 (VHSQTSAVKTQIKK) the composition is skewed to polar residues.

The protein belongs to the bacterial ribosomal protein bS20 family.

Its function is as follows. Binds directly to 16S ribosomal RNA. In Malacoplasma penetrans (strain HF-2) (Mycoplasma penetrans), this protein is Small ribosomal subunit protein bS20.